Here is a 481-residue protein sequence, read N- to C-terminus: uncharacterized protein (481 aa).

13 consecutive transmembrane segments (helical) span residues 3–23 (YLPM…LLHG), 33–53 (FITA…YYYF), 75–95 (QAII…GMGE), 99–119 (NNMF…IVLA), 122–142 (IFNL…LVFL), 155–175 (YMIM…FLLA), 196–216 (IYGG…LPPF), 241–261 (FVLV…DYFA), 264–284 (HAVL…MALL), 303–323 (VATG…FHAI), 351–371 (GGLL…KLAI), 400–420 (IIMI…FYLI), and 443–463 (VFSL…PDIV).

It localises to the cell membrane. This is an uncharacterized protein from Methanocaldococcus jannaschii (strain ATCC 43067 / DSM 2661 / JAL-1 / JCM 10045 / NBRC 100440) (Methanococcus jannaschii).